Here is a 588-residue protein sequence, read N- to C-terminus: Probable G-protein coupled receptor 162 (588 aa).

Topologically, residues 1 to 17 (MARGGLGAEEASLRSNA) are extracellular. The chain crosses the membrane as a helical span at residues 18–38 (LSWLACGLLALLANAWIILSI). Residues 39 to 49 (SAKQQKHKPLE) lie on the Cytoplasmic side of the membrane. Residues 50–70 (LLLCFLAGTHILMAAVPLTTF) traverse the membrane as a helical segment. The Extracellular portion of the chain corresponds to 71–91 (AVVQLRRQASSDYDWNESICK). Asn86 carries N-linked (GlcNAc...) asparagine glycosylation. A helical membrane pass occupies residues 92–112 (VFVSTYYTLALATCFTVASLS). Over 113 to 133 (YHRMWMVRWPVNYRLSNAKKQ) the chain is Cytoplasmic. A helical membrane pass occupies residues 134–154 (ALHAVMGIWMVSFILSTLPSI). At 155-174 (GWHNNGERYYARGCQFIVSK) the chain is on the extracellular side. Residues 175-195 (IGLGFGVCFSLLLLGGIVMGL) form a helical membrane-spanning segment. Over 196 to 275 (VCVAITFYQT…SLQVTNLVSA (80 aa)) the chain is Cytoplasmic. A helical transmembrane segment spans residues 276–296 (IVFLYDSLTGVPILVVSFFSL). Residues 297–303 (KSDSAPP) lie on the Extracellular side of the membrane. Residues 304–324 (WMVLAVLWCSMAQTLLLPSFI) form a helical membrane-spanning segment. Over 325-588 (WSCERYRADV…GNPIFPQLTL (264 aa)) the chain is Cytoplasmic. A phosphoserine mark is found at Ser413 and Ser435. 2 disordered regions span residues 511–545 (ETPL…SPDS) and 561–588 (SLTG…QLTL). A compositionally biased stretch (pro residues) spans 514-525 (LPSPTASPGPSP). A compositionally biased stretch (low complexity) spans 530 to 540 (PLGFSPRRLSL).

It belongs to the G-protein coupled receptor 1 family.

It localises to the cell membrane. Functionally, orphan receptor. The chain is Probable G-protein coupled receptor 162 (Gpr162) from Mus musculus (Mouse).